The sequence spans 477 residues: Erythritol/L-threitol-binding protein (477 aa).

The segment at residues 1 to 38 is a signal peptide (tat-type signal); it reads MMSRESQPGLHRQLSRRNMLAAMGLAGAAAVSLPVLSA.

This sequence belongs to the bacterial solute-binding protein 1 family. Predicted to be exported by the Tat system. The position of the signal peptide cleavage has not been experimentally proven.

Part of an ABC transporter complex involved in erythritol/L-threitol import. Binds erythritol and L-threitol. Functions in the transport for the degradation pathways of erythritol and L-threitol, that allow M.smegmatis to grow on these compounds as the sole carbon source. This is Erythritol/L-threitol-binding protein from Mycolicibacterium smegmatis (strain ATCC 700084 / mc(2)155) (Mycobacterium smegmatis).